The chain runs to 151 residues: RNA polymerase-binding transcription factor DksA (151 aa).

Residues 34 to 54 are a coiled coil; that stretch reads EAQLSHFKRILEAWRNQLRDE. Positions 114, 117, 135, and 138 each coordinate Zn(2+). A dksA C4-type zinc finger spans residues 114–138; it reads CESCGVEIGIRRLEARPTADLCIDC.

This sequence belongs to the DksA family. In terms of assembly, interacts directly with the RNA polymerase.

The protein localises to the cytoplasm. Transcription factor that acts by binding directly to the RNA polymerase (RNAP). Required for negative regulation of rRNA expression and positive regulation of several amino acid biosynthesis promoters. Also required for regulation of fis expression. The sequence is that of RNA polymerase-binding transcription factor DksA from Salmonella typhi.